The sequence spans 124 residues: Large ribosomal subunit protein bL12 (124 aa).

The protein belongs to the bacterial ribosomal protein bL12 family. Homodimer. Part of the ribosomal stalk of the 50S ribosomal subunit. Forms a multimeric L10(L12)X complex, where L10 forms an elongated spine to which 2 to 4 L12 dimers bind in a sequential fashion. Binds GTP-bound translation factors.

Functionally, forms part of the ribosomal stalk which helps the ribosome interact with GTP-bound translation factors. Is thus essential for accurate translation. This Dehalococcoides mccartyi (strain ATCC BAA-2266 / KCTC 15142 / 195) (Dehalococcoides ethenogenes (strain 195)) protein is Large ribosomal subunit protein bL12.